We begin with the raw amino-acid sequence, 186 residues long: Hydra actinoporin-like toxin 5 (186 aa).

Positions 1–20 (MLLYVCLVNLLLQSPSGVDS) are cleaved as a signal peptide. A Cell attachment site motif is present at residues 158 to 160 (RDG).

This sequence belongs to the actinoporin family. HALT subfamily. Octamer or nonamer in membranes. Monomer in the soluble state. In vitro, interacts with folate receptor alpha (of target organism).

Its subcellular location is the nematocyst. It localises to the secreted. It is found in the target cell membrane. In terms of biological role, pore-forming protein that forms hydrophilic pores and causes cytolysis. Compared to equinatoxin-2 (AC P61914), it reveals lower cytolysis activity (5-12-fold difference, tested on erythrocytes), a larger pore size (probably 2-3 nm) and different affinity to membrane lipids (100-fold lower affinity to sphingomyelin). Binds to sulfatides (SFT) as well as to the two sphingolipids, lysophosphatidic acid (LPA) and sphingosine-1-phosphate (S1P). It seems to bind more strongly to LPA than to S1P and SFT. Shows cytolytic activity on HeLa cells, with a different potency than its paralogs (from most potent to less potent: HALT-4&gt;HALT-6~HALT-1&gt;HALT-3&gt;HALT-7&gt;HALT-2). Pore formation is a multi-step process that involves specific recognition of membrane lipid by a protein aromatic residues rich region, firm binding to the membrane (mainly driven by hydrophobic interactions) accompanied by the transfer of the N-terminal region to the lipid-water interface and finally pore formation after oligomerization of monomers. In vitro, binds to the folate receptor alpha (FOLR1), a GPI-anchored membrane protein that plays a major role in the uptake of folate/folic acid into cells via endocytosis, suggesting a possible involvement of this receptor in the mechanism of HALT-1-induced cell lysis. In vivo, does not cause visible paralysis in larvae of the blowfly Sarcophaga faculata, the most common arthropod prey of Hydra. The protein is Hydra actinoporin-like toxin 5 of Hydra vulgaris (Hydra).